The chain runs to 218 residues: Glutathione S-transferase Mu 4 (218 aa).

The GST N-terminal domain maps to 1 to 88; that stretch reads MPMTLGYWDI…YIARKHNLCG (88 aa). Residues 7-8, 46-50, 59-60, and 72-73 each bind glutathione; these read YW, WLSEK, NL, and QS. The 119-residue stretch at 90–208 folds into the GST C-terminal domain; it reads TEEEKIRVDI…KTSRFLRTPL (119 aa). Substrate is bound at residue Y116.

It belongs to the GST superfamily. Mu family. Homodimer. Widely expressed.

Its subcellular location is the cytoplasm. The enzyme catalyses RX + glutathione = an S-substituted glutathione + a halide anion + H(+). The catalysed reaction is 1-chloro-2,4-dinitrobenzene + glutathione = 2,4-dinitrophenyl-S-glutathione + chloride + H(+). It carries out the reaction (13S,14S)-epoxy-(4Z,7Z,9E,11E,16Z,19Z)-docosahexaenoate + glutathione = (13R)-S-glutathionyl-(14S)-hydroxy-(4Z,7Z,9E,11E,16Z,19Z)-docosahexaenoate. It catalyses the reaction leukotriene C4 = leukotriene A4 + glutathione. Conjugation of reduced glutathione to a wide number of exogenous and endogenous hydrophobic electrophiles. Catalyzes the conjugation of leukotriene A4 with reduced glutathione (GSH) to form leukotriene C4. Can also catalyze the transfer of a glutathionyl group from glutathione (GSH) to 13(S),14(S)-epoxy-docosahexaenoic acid to form maresin conjugate in tissue regeneration 1 (MCTR1), a bioactive lipid mediator that possess potent anti-inflammatory and proresolving actions. This chain is Glutathione S-transferase Mu 4, found in Mus musculus (Mouse).